The sequence spans 119 residues: Large ribosomal subunit protein bL20 (119 aa).

This sequence belongs to the bacterial ribosomal protein bL20 family.

Binds directly to 23S ribosomal RNA and is necessary for the in vitro assembly process of the 50S ribosomal subunit. It is not involved in the protein synthesizing functions of that subunit. This chain is Large ribosomal subunit protein bL20, found in Lactococcus lactis subsp. cremoris (strain MG1363).